The primary structure comprises 110 residues: UPF0122 protein STER_0914 (110 aa).

Belongs to the UPF0122 family.

Might take part in the signal recognition particle (SRP) pathway. This is inferred from the conservation of its genetic proximity to ftsY/ffh. May be a regulatory protein. This Streptococcus thermophilus (strain ATCC BAA-491 / LMD-9) protein is UPF0122 protein STER_0914.